Consider the following 923-residue polypeptide: Transportin-3 (923 aa).

Met-1 carries the N-acetylmethionine modification. A Phosphoserine modification is found at Ser-74. Thr-896 bears the Phosphothreonine mark.

As to quaternary structure, interacts with (GTP-bound) Ran. Interacts with (phosphorylated) SFRS1 and SFRS2; leading to their nuclear import. Interacts with NUP62. Interacts with RBM4. Interacts with CPSF6, promoting its nuclear import. (Microbial infection) Interacts with the HIV-1 pre-integration complex (PIC), which is composed of viral genome, matrix protein, Vpr and integrase. Interacts with HIV-1 integrase protein; the interaction is direct. As to expression, expressed in skeletal muscle.

The protein resides in the nucleus envelope. The protein localises to the cytoplasm. Its function is as follows. Importin, which transports target proteins into the nucleus. Specifically mediates the nuclear import of splicing factor serine/arginine (SR) proteins, such as RBM4, SFRS1 and SFRS2, by recognizing phosphorylated SR domains. Also mediates the nuclear import of serine/arginine (SR) protein CPSF6, independently of CPSF6 phosphorylation. The nuclear import process is regulated by the small GTPase Ran that partitions between cytoplasm and nucleus in the predominantly GDP- and GTP-bound form, respectively. Importin associates with target cargo proteins in the cytoplasm, and the competitive binding of GTP-bound Ran induces the release of cargos in the nucleus. In terms of biological role, (Microbial infection) Involved in immunodeficiency virus (HIV-1) infection by importing the pre-integration complex (PIC) into the nucleus. Required for a nuclear maturation step of HIV-1 prior to integration. The chain is Transportin-3 from Homo sapiens (Human).